The chain runs to 507 residues: Bifunctional purine biosynthesis protein PurH (507 aa).

The region spanning 1–144 (MKRALLSVSD…KNSDSVWAVV (144 aa)) is the MGS-like domain.

It belongs to the PurH family.

It catalyses the reaction (6R)-10-formyltetrahydrofolate + 5-amino-1-(5-phospho-beta-D-ribosyl)imidazole-4-carboxamide = 5-formamido-1-(5-phospho-D-ribosyl)imidazole-4-carboxamide + (6S)-5,6,7,8-tetrahydrofolate. It carries out the reaction IMP + H2O = 5-formamido-1-(5-phospho-D-ribosyl)imidazole-4-carboxamide. Its pathway is purine metabolism; IMP biosynthesis via de novo pathway; 5-formamido-1-(5-phospho-D-ribosyl)imidazole-4-carboxamide from 5-amino-1-(5-phospho-D-ribosyl)imidazole-4-carboxamide (10-formyl THF route): step 1/1. It participates in purine metabolism; IMP biosynthesis via de novo pathway; IMP from 5-formamido-1-(5-phospho-D-ribosyl)imidazole-4-carboxamide: step 1/1. This is Bifunctional purine biosynthesis protein PurH from Lacticaseibacillus casei (strain BL23) (Lactobacillus casei).